We begin with the raw amino-acid sequence, 137 residues long: Small ribosomal subunit protein uS11 (137 aa).

The tract at residues 116–137 (EDVTPIPHDGTRPKGGRRGRRV) is disordered.

Belongs to the universal ribosomal protein uS11 family. Part of the 30S ribosomal subunit.

In terms of biological role, located on the platform of the 30S subunit. The protein is Small ribosomal subunit protein uS11 of Pyrococcus abyssi (strain GE5 / Orsay).